We begin with the raw amino-acid sequence, 557 residues long: Eudesmanediol synthase (557 aa).

Residues D310 and D314 each coordinate Mg(2+). 3 residues coordinate substrate: D310, D314, and R450. Positions 310-314 (DDTFD) match the DDXXD motif motif. The Mg(2+) site is built by N453 and S457.

Belongs to the terpene synthase family. In terms of assembly, monomer. Mg(2+) serves as cofactor. Requires Mn(2+) as cofactor.

It localises to the cytoplasm. It catalyses the reaction (2E,6E)-farnesyl diphosphate + 2 H2O = 7-epi-ent-eudesmane-5,11-diol + diphosphate. Its pathway is secondary metabolite biosynthesis; terpenoid biosynthesis. Functionally, component of the volatile terpenes biosynthesis pathways. Dihydroxylated sesquiterpenoid synthase that generates dually hydroxylated products directly from (E,E)-farnesyl diphosphate, primarily eudesmane-2,11-diol, along with two closely related structural isomers. This chain is Eudesmanediol synthase, found in Zea mays (Maize).